A 77-amino-acid chain; its full sequence is Translation initiation factor IF-1, chloroplastic (77 aa).

The S1-like domain occupies 1–71; the sequence is MKEQKWIHEG…TRGRIIYRLR (71 aa).

The protein belongs to the IF-1 family. Component of the 30S ribosomal translation pre-initiation complex which assembles on the 30S ribosome in the order IF-2 and IF-3, IF-1 and N-formylmethionyl-tRNA(fMet); mRNA recruitment can occur at any time during PIC assembly.

Its subcellular location is the plastid. It is found in the chloroplast. Functionally, one of the essential components for the initiation of protein synthesis. Stabilizes the binding of IF-2 and IF-3 on the 30S subunit to which N-formylmethionyl-tRNA(fMet) subsequently binds. Helps modulate mRNA selection, yielding the 30S pre-initiation complex (PIC). Upon addition of the 50S ribosomal subunit IF-1, IF-2 and IF-3 are released leaving the mature 70S translation initiation complex. This chain is Translation initiation factor IF-1, chloroplastic, found in Nandina domestica (Heavenly bamboo).